The sequence spans 590 residues: Cytidine monophosphate-N-acetylneuraminic acid hydroxylase (590 aa).

In terms of domain architecture, Rieske spans 14–112; it reads LSPVEVASLK…VEMDENNRLL (99 aa). Residues Cys-54, His-56, Cys-75, and His-78 each contribute to the [2Fe-2S] cluster site.

It belongs to the CMP-Neu5Ac hydroxylase family. [2Fe-2S] cluster is required as a cofactor.

It is found in the cytoplasm. It carries out the reaction CMP-N-acetyl-beta-neuraminate + 2 Fe(II)-[cytochrome b5] + O2 + 2 H(+) = CMP-N-glycoloyl-beta-neuraminate + 2 Fe(III)-[cytochrome b5] + H2O. It functions in the pathway amino-sugar metabolism; N-acetylneuraminate metabolism. Its function is as follows. Sialic acids are components of carbohydrate chains of glycoconjugates and are involved in cell-cell recognition and cell-pathogen interactions. Catalyzes the conversion of CMP-N-acetylneuraminic acid (CMP-Neu5Ac) into its hydroxylated derivative CMP-N-glycolylneuraminic acid (CMP-Neu5Gc), a sialic acid abundantly expressed at the surface of many cells. In Pan troglodytes (Chimpanzee), this protein is Cytidine monophosphate-N-acetylneuraminic acid hydroxylase.